The primary structure comprises 809 residues: Quinate/shikimate dehydrogenase (quinone) (809 aa).

A run of 5 helical transmembrane segments spans residues V14–G34, G41–F61, V68–F88, F90–T110, and A127–I147.

Belongs to the bacterial PQQ dehydrogenase family. Pyrroloquinoline quinone is required as a cofactor.

The protein resides in the cell membrane. The enzyme catalyses L-quinate + a quinone = 3-dehydroquinate + a quinol. The catalysed reaction is shikimate + a quinone = 3-dehydroshikimate + a quinol. It functions in the pathway aromatic compound metabolism; 3,4-dihydroxybenzoate biosynthesis; 3-dehydroquinate from D-quinate (PQQ route): step 1/1. Functionally, can act either on quinate or on shikimate. The polypeptide is Quinate/shikimate dehydrogenase (quinone) (quiA) (Acinetobacter baylyi (strain ATCC 33305 / BD413 / ADP1)).